We begin with the raw amino-acid sequence, 85 residues long: Large ribosomal subunit protein bL27 (85 aa).

A disordered region spans residues 1-21 (MAHKKAGGSSRNGRDSEGRRL).

The protein belongs to the bacterial ribosomal protein bL27 family.

The polypeptide is Large ribosomal subunit protein bL27 (Rhodospirillum rubrum (strain ATCC 11170 / ATH 1.1.1 / DSM 467 / LMG 4362 / NCIMB 8255 / S1)).